Consider the following 156-residue polypeptide: MPTHLEGDLVVDGHRFALVVGRFNEHVTEDLLGGALDTLERHGADLDEVTVVHVPGSWEIPVAAQKCARTGDYDAVICLGAVVRGETPHFDYVCSGATSGTMQTSLDTEVPVLFGILTTDTVDQAIARAGSKAGNKGREAAEAAIEMATLMPKLEG.

5-amino-6-(D-ribitylamino)uracil contacts are provided by residues F23, 57-59 (SWE), and 81-83 (AVV). 86–87 (ET) is a (2S)-2-hydroxy-3-oxobutyl phosphate binding site. Residue H89 is the Proton donor of the active site. Position 114 (F114) interacts with 5-amino-6-(D-ribitylamino)uracil. R128 serves as a coordination point for (2S)-2-hydroxy-3-oxobutyl phosphate.

This sequence belongs to the DMRL synthase family.

It carries out the reaction (2S)-2-hydroxy-3-oxobutyl phosphate + 5-amino-6-(D-ribitylamino)uracil = 6,7-dimethyl-8-(1-D-ribityl)lumazine + phosphate + 2 H2O + H(+). It functions in the pathway cofactor biosynthesis; riboflavin biosynthesis; riboflavin from 2-hydroxy-3-oxobutyl phosphate and 5-amino-6-(D-ribitylamino)uracil: step 1/2. Functionally, catalyzes the formation of 6,7-dimethyl-8-ribityllumazine by condensation of 5-amino-6-(D-ribitylamino)uracil with 3,4-dihydroxy-2-butanone 4-phosphate. This is the penultimate step in the biosynthesis of riboflavin. In Salinibacter ruber (strain DSM 13855 / M31), this protein is 6,7-dimethyl-8-ribityllumazine synthase.